A 309-amino-acid polypeptide reads, in one-letter code: Olfactory receptor 8U9 (309 aa).

The Extracellular portion of the chain corresponds to 1–28 (MTQINCTQVTEFILVGLTDRQELKMPLF). Asn5 carries N-linked (GlcNAc...) asparagine glycosylation. Residues 29-49 (VLFLSIYLFTVVGNLGLILLI) traverse the membrane as a helical segment. The Cytoplasmic portion of the chain corresponds to 50–56 (RTDEKLN). A helical membrane pass occupies residues 57 to 77 (TPMYFFLSNLAFVDFCYSSVI). Residues 78 to 97 (TPKMLGNFLYKQNSISFNAC) are Extracellular-facing. Cys97 and Cys179 are disulfide-bonded. A helical membrane pass occupies residues 98 to 118 (AAQLGCFLAFMTAECLLLASM). Over 119 to 143 (AYDRYVAICNPLMYMVVMSPGICIQ) the chain is Cytoplasmic. Residues 144 to 164 (LVAAPHSYSILVALFHTILTF) traverse the membrane as a helical segment. Residues 165–204 (RLSYCHSNIVNHFYCDDMPLLRLTCSDTRFKQLWIFACAG) are Extracellular-facing. The chain crosses the membrane as a helical span at residues 205–225 (IMFISSLLIVFVSYMFIISAI). The Cytoplasmic portion of the chain corresponds to 226-239 (LRMHSAEGRQKAFS). The chain crosses the membrane as a helical span at residues 240 to 260 (TCGSHMLAVTIFYGTLIFMYL). Residues 261–272 (QPSSSHALDTDK) are Extracellular-facing. Residues 273–293 (MASVFYTVIIPMLNPLIYSLQ) form a helical membrane-spanning segment. The Cytoplasmic portion of the chain corresponds to 294–309 (NKEVKEALKKIIINKN).

This sequence belongs to the G-protein coupled receptor 1 family.

The protein resides in the cell membrane. Functionally, odorant receptor. This chain is Olfactory receptor 8U9 (OR8U9), found in Homo sapiens (Human).